Reading from the N-terminus, the 361-residue chain is Holliday junction branch migration complex subunit RuvB (361 aa).

The interval 1–183 (MAEPSLVAAG…FGFTGHLEFY (183 aa)) is large ATPase domain (RuvB-L). Residues Leu-22, Arg-23, Gly-64, Lys-67, Thr-68, Thr-69, 130–132 (EDF), Arg-173, Tyr-183, and Arg-220 each bind ATP. Position 68 (Thr-68) interacts with Mg(2+). The segment at 184-254 (SVPELELVLR…SASAALDMYE (71 aa)) is small ATPAse domain (RuvB-S). The segment at 257-361 (KKGLDRLDRS…VTGEWAPESQ (105 aa)) is head domain (RuvB-H). Positions 312 and 317 each coordinate DNA.

It belongs to the RuvB family. As to quaternary structure, homohexamer. Forms an RuvA(8)-RuvB(12)-Holliday junction (HJ) complex. HJ DNA is sandwiched between 2 RuvA tetramers; dsDNA enters through RuvA and exits via RuvB. An RuvB hexamer assembles on each DNA strand where it exits the tetramer. Each RuvB hexamer is contacted by two RuvA subunits (via domain III) on 2 adjacent RuvB subunits; this complex drives branch migration. In the full resolvosome a probable DNA-RuvA(4)-RuvB(12)-RuvC(2) complex forms which resolves the HJ.

Its subcellular location is the cytoplasm. The catalysed reaction is ATP + H2O = ADP + phosphate + H(+). In terms of biological role, the RuvA-RuvB-RuvC complex processes Holliday junction (HJ) DNA during genetic recombination and DNA repair, while the RuvA-RuvB complex plays an important role in the rescue of blocked DNA replication forks via replication fork reversal (RFR). RuvA specifically binds to HJ cruciform DNA, conferring on it an open structure. The RuvB hexamer acts as an ATP-dependent pump, pulling dsDNA into and through the RuvAB complex. RuvB forms 2 homohexamers on either side of HJ DNA bound by 1 or 2 RuvA tetramers; 4 subunits per hexamer contact DNA at a time. Coordinated motions by a converter formed by DNA-disengaged RuvB subunits stimulates ATP hydrolysis and nucleotide exchange. Immobilization of the converter enables RuvB to convert the ATP-contained energy into a lever motion, pulling 2 nucleotides of DNA out of the RuvA tetramer per ATP hydrolyzed, thus driving DNA branch migration. The RuvB motors rotate together with the DNA substrate, which together with the progressing nucleotide cycle form the mechanistic basis for DNA recombination by continuous HJ branch migration. Branch migration allows RuvC to scan DNA until it finds its consensus sequence, where it cleaves and resolves cruciform DNA. The polypeptide is Holliday junction branch migration complex subunit RuvB (Pseudarthrobacter chlorophenolicus (strain ATCC 700700 / DSM 12829 / CIP 107037 / JCM 12360 / KCTC 9906 / NCIMB 13794 / A6) (Arthrobacter chlorophenolicus)).